The following is a 145-amino-acid chain: Partner of bursicon (145 aa).

Positions 1–28 (MKENFSIMFIHSIFLILIIFIYSNETIA) are cleaved as a signal peptide. 5 disulfide bridges follow: Cys36/Cys94, Cys60/Cys109, Cys69/Cys135, Cys73/Cys137, and Cys91/Cys140. One can recognise a CTCK domain in the interval 36–131 (CETLQSEVHI…NGVMEIKIRE (96 aa)).

As to quaternary structure, heterodimer of burs and pburs.

The protein resides in the secreted. Final heterodimeric neurohormone released at the end of the molting cycle, involved in the sclerotization (tanning) of the insect cuticle, melanization and wing spreading. In Apis mellifera (Honeybee), this protein is Partner of bursicon (pburs).